The sequence spans 435 residues: Glutamine synthetase (435 aa).

Residues Lys12–Ala94 enclose the GS beta-grasp domain. The GS catalytic domain maps to Pro100–Val435. Mg(2+) contacts are provided by Glu123, Glu125, Glu180, and Glu187. Gly232 is a binding site for L-glutamate. Residue His236 coordinates Mg(2+). An ATP-binding site is contributed by Ser240. The L-glutamate site is built by Arg291 and Arg315. ATP is bound by residues Arg315 and Arg320. Glu328 contributes to the Mg(2+) binding site. Residue Arg330 coordinates L-glutamate.

It belongs to the glutamine synthetase family. As to quaternary structure, homooctamer. Mg(2+) serves as cofactor.

The catalysed reaction is L-glutamate + NH4(+) + ATP = L-glutamine + ADP + phosphate + H(+). Its activity is regulated as follows. Inhibited by methionine sulfoximine, ADP and pyrophosphate, but not by various nitrogen-containing metabolites that inhibit other GS enzymes. Catalyzes the ATP-dependent biosynthesis of glutamine from glutamate and ammonia. This chain is Glutamine synthetase, found in Rhizobium meliloti (strain 1021) (Ensifer meliloti).